Reading from the N-terminus, the 419-residue chain is Probable pectate lyase C (419 aa).

The N-terminal stretch at 1 to 19 (MRLTPSLISCLSLLHFTSA) is a signal peptide. Residues Asn-48, Asn-164, and Asn-201 are each glycosylated (N-linked (GlcNAc...) asparagine). Residue Arg-204 is part of the active site. Positions 261–296 (NENFHAYVETNYYDSDKDGTLNGSELGVDSTNYGGM) constitute an EF-hand domain. Positions 274, 276, 278, and 280 each coordinate Ca(2+). Asn-282 is a glycosylation site (N-linked (GlcNAc...) asparagine). Glu-285 is a Ca(2+) binding site. A disordered region spans residues 352-395 (ISDEADMGGAGDLDQGTTPTDTDGDGIPDDAEAELGTDPNTADS). The segment covering 363–372 (DLDQGTTPTD) has biased composition (low complexity). Residues 373–386 (TDGDGIPDDAEAEL) are compositionally biased toward acidic residues.

It belongs to the polysaccharide lyase 1 family. Requires Ca(2+) as cofactor.

It localises to the secreted. The enzyme catalyses Eliminative cleavage of (1-&gt;4)-alpha-D-galacturonan to give oligosaccharides with 4-deoxy-alpha-D-galact-4-enuronosyl groups at their non-reducing ends.. In terms of biological role, pectinolytic enzyme consist of four classes of enzymes: pectin lyase, polygalacturonase, pectin methylesterase and rhamnogalacturonase. Among pectinolytic enzymes, pectin lyase is the most important in depolymerization of pectin, since it cleaves internal glycosidic bonds of highly methylated pectins. Favors pectate, the anion, over pectin, the methyl ester. This chain is Probable pectate lyase C (plyC), found in Aspergillus oryzae (strain ATCC 42149 / RIB 40) (Yellow koji mold).